A 705-amino-acid chain; its full sequence is Elongation factor G (705 aa).

The tr-type G domain maps to 8-289 (VNYRNIGISA…TVINYLPSPK (282 aa)). GTP-binding positions include 17–24 (AHIDAGKT), 88–92 (DTPGH), and 142–145 (NKMD).

Belongs to the TRAFAC class translation factor GTPase superfamily. Classic translation factor GTPase family. EF-G/EF-2 subfamily.

Its subcellular location is the cytoplasm. Functionally, catalyzes the GTP-dependent ribosomal translocation step during translation elongation. During this step, the ribosome changes from the pre-translocational (PRE) to the post-translocational (POST) state as the newly formed A-site-bound peptidyl-tRNA and P-site-bound deacylated tRNA move to the P and E sites, respectively. Catalyzes the coordinated movement of the two tRNA molecules, the mRNA and conformational changes in the ribosome. The chain is Elongation factor G from Wigglesworthia glossinidia brevipalpis.